The primary structure comprises 1605 residues: Nuclear pore complex protein Nup153 (1605 aa).

The segment covering 1-16 has biased composition (gly residues); that stretch reads MAAAGGGGPGGPGTGG. 2 disordered regions span residues 1 to 44 and 185 to 208; these read MAAA…GIIS and STSQ…SDKD. 2 stretches are compositionally biased toward polar residues: residues 27–44 and 194–203; these read SGRT…GIIS and ISTTSGFSSR. The stretch at 249–250 is repeat 1; the sequence is FG. Residues 249–1556 form a 33 X 2 AA repeats of F-G region; the sequence is FGSLSPSLGN…NSSGGVFTFN (1308 aa). Disordered regions lie at residues 332 to 373, 397 to 476, and 497 to 522; these read SPLA…PFPP, LTPS…GPVL, and SGSA…SSSP. Positions 397–409 are enriched in polar residues; the sequence is LTPSAVSNTNSRR. Basic and acidic residues predominate over residues 410 to 420; that stretch reads IQPDKHNESRK. 2 stretches are compositionally biased toward polar residues: residues 421–432 and 497–517; these read NNLQTTSQSHSF and SGSA…TCRL. The RanBP2-type 1 zinc-finger motif lies at 655 to 684; it reads AFGLWQCSACFHENMSSDSNCISCSALKPR. The stretch at 656 to 657 is repeat 2; that stretch reads FG. Residues Cys661, Cys664, Cys675, and Cys678 each contribute to the Zn(2+) site. The disordered stretch occupies residues 686 to 711; it reads TETSKKLPASPPSSNTKSTVPLSSTP. Residues 697 to 711 show a composition bias toward polar residues; that stretch reads PSSNTKSTVPLSSTP. 4 RanBP2-type zinc fingers span residues 720–749, 790–819, 842–871, and 906–935; these read PAGM…PKPG, PMGS…EKPG, PTGS…AKPG, and SAGS…SKPG. Residues Cys726, Cys729, Cys740, Cys743, Cys796, Cys799, Cys810, Cys813, Cys848, Cys851, Cys862, and Cys865 each coordinate Zn(2+). 31 repeat units span residues 943–944, 959–960, 988–989, 1007–1008, 1021–1022, 1044–1045, 1100–1101, 1116–1117, 1134–1135, 1148–1149, 1167–1168, 1188–1189, 1227–1228, 1243–1244, 1259–1260, 1275–1276, 1291–1292, 1307–1308, 1339–1340, 1356–1357, 1371–1372, 1382–1383, 1414–1415, 1430–1431, 1448–1449, 1470–1471, 1482–1483, 1502–1503, 1512–1513, 1521–1522, and 1535–1536. The segment covering 1499–1518 has biased composition (polar residues); sequence VPAFGSSSAQPPVFGQQATQ. The disordered stretch occupies residues 1499 to 1529; the sequence is VPAFGSSSAQPPVFGQQATQPSFGSPAAPSA. A compositionally biased stretch (low complexity) spans 1519 to 1529; that stretch reads PSFGSPAAPSA. Residues 1556–1605 form a disordered region; sequence NANSGSTTQPPPPGYMFNAAAPGFNMGTNGRTTPASTISTRKIKTARRRK. The span at 1581–1595 shows a compositional bias: polar residues; it reads MGTNGRTTPASTIST. A compositionally biased stretch (basic residues) spans 1596–1605; the sequence is RKIKTARRRK.

Belongs to the NUP153 family. Interacts (via C-terminal domain) with the nuclear receptor kpnb1; the interaction occurs in a RanGTP-dependent manner. Associates with the Importin alpha/Importin beta receptor. It depends on Zn(2+) as a cofactor. Egg (at protein level).

Its subcellular location is the nucleus membrane. The protein resides in the nucleus. It is found in the nuclear pore complex. Component of the nuclear pore complex (NPC), a complex required for the trafficking across the nuclear envelope. Functions as a scaffolding element in the nuclear phase of the NPC essential for normal nucleocytoplasmic transport of proteins and mRNAs. May be involved in the retention of unspliced mRNAs in the nucleus. Probably mediates tpr anchoring to the nuclear membrane at NPC. Possible DNA-binding subunit of the nuclear pore complex (NPC). The protein is Nuclear pore complex protein Nup153 (nup153) of Xenopus laevis (African clawed frog).